The primary structure comprises 184 residues: Ribosome-recycling factor (184 aa).

It belongs to the RRF family.

Its subcellular location is the cytoplasm. Responsible for the release of ribosomes from messenger RNA at the termination of protein biosynthesis. May increase the efficiency of translation by recycling ribosomes from one round of translation to another. This is Ribosome-recycling factor from Leptospira borgpetersenii serovar Hardjo-bovis (strain JB197).